The sequence spans 211 residues: Large ribosomal subunit protein bL25 (211 aa).

Positions 188–211 (APKAAKVSTDDEAAAPAEEAPAAE) are disordered. Positions 201 to 211 (AAPAEEAPAAE) are enriched in low complexity.

The protein belongs to the bacterial ribosomal protein bL25 family. CTC subfamily. In terms of assembly, part of the 50S ribosomal subunit; part of the 5S rRNA/L5/L18/L25 subcomplex. Contacts the 5S rRNA. Binds to the 5S rRNA independently of L5 and L18.

In terms of biological role, this is one of the proteins that binds to the 5S RNA in the ribosome where it forms part of the central protuberance. This Colwellia psychrerythraea (strain 34H / ATCC BAA-681) (Vibrio psychroerythus) protein is Large ribosomal subunit protein bL25.